The following is a 176-amino-acid chain: Disulfide bond formation protein B (176 aa).

The Cytoplasmic portion of the chain corresponds to 1 to 14 (MLRFLNQCSQGRGA). A helical transmembrane segment spans residues 15-31 (WLLMAFTALALELTALW). The Periplasmic segment spans residues 32 to 49 (FQHVMLLKPCVLCIYERC). Residues cysteine 41 and cysteine 44 are joined by a disulfide bond. A helical transmembrane segment spans residues 50–65 (ALFGVLGAALIGAIAP). The Cytoplasmic segment spans residues 66-71 (KTPLRY). Residues 72 to 89 (VAMVIWLYSAFRGVQLTY) form a helical membrane-spanning segment. Over 90–144 (EHTMLQLYPSPFATCDFMVRFPEWLPLDKWVPQVFVASGDCAERQWDFLGMEMPQ) the chain is Periplasmic. The cysteines at positions 104 and 130 are disulfide-linked. The helical transmembrane segment at 145 to 163 (WLLGIFIAYLIVAVLVVIS) threads the bilayer. Over 164-176 (QPFKAKKRDLFGR) the chain is Cytoplasmic.

This sequence belongs to the DsbB family.

The protein localises to the cell inner membrane. Its function is as follows. Required for disulfide bond formation in some periplasmic proteins such as PhoA or OmpA. Acts by oxidizing the DsbA protein. The chain is Disulfide bond formation protein B from Shigella flexneri.